Here is a 618-residue protein sequence, read N- to C-terminus: Acetolactate synthase (618 aa).

Residues 1–30 (MSAPTKPHSPTFKPEPHSAANEPKHPAARP) are disordered. Glutamate 85 lines the thiamine diphosphate pocket. FAD is bound by residues arginine 187, 293-314 (HGTV…LGTR), and 336-355 (DIDP…IVGD). A thiamine pyrophosphate binding region spans residues 429-509 (QHQMWAAQFI…VKVALINNGN (81 aa)). Positions 480 and 507 each coordinate Mg(2+).

The protein belongs to the TPP enzyme family. Requires Mg(2+) as cofactor. It depends on thiamine diphosphate as a cofactor.

It carries out the reaction 2 pyruvate + H(+) = (2S)-2-acetolactate + CO2. It functions in the pathway amino-acid biosynthesis; L-isoleucine biosynthesis; L-isoleucine from 2-oxobutanoate: step 1/4. It participates in amino-acid biosynthesis; L-valine biosynthesis; L-valine from pyruvate: step 1/4. The polypeptide is Acetolactate synthase (ilvB) (Mycobacterium bovis (strain ATCC BAA-935 / AF2122/97)).